A 94-amino-acid polypeptide reads, in one-letter code: uncharacterized protein (94 aa).

Residues 1–26 (MNDQRDQAVPWATGLAVAGFVAAVIA) form the signal peptide. The next 2 helical transmembrane spans lie at 42-62 (LLAV…LWGW) and 71-91 (FVLG…ALTL).

It localises to the cell membrane. This is an uncharacterized protein from Mycobacterium tuberculosis (strain CDC 1551 / Oshkosh).